Consider the following 373-residue polypeptide: Alpha-1,3-mannosyl-glycoprotein 4-beta-N-acetylglucosaminyltransferase-like protein MGAT4D (373 aa).

At 1 to 5 (MKAKN) the chain is on the cytoplasmic side. A helical; Signal-anchor for type II membrane protein transmembrane segment spans residues 6 to 26 (VNLLFAFVAVLLFGFSCFCIS). Over 27–373 (RMNQTNNQLI…REQHLKDNYY (347 aa)) the chain is Lumenal. N29, N54, and N144 each carry an N-linked (GlcNAc...) asparagine glycan.

Belongs to the glycosyltransferase 54 family. In terms of assembly, isoform 2 self-associates; specifically in the endoplasmic reticulum prior to its translocation to the Golgi. Isoform 1 and isoform 2 interact with MGAT1, MGAT3 and MAN2A2; isoform 2 interacts specifically with MGAT1 in the Golgi. Isoform 2 is N-glycosylated; consisting of high-mannose and/or hybrid glycans. Isoform 1 and isoform 2 are specifically expressed in testis. Isoform 2 is expressed in spermatocytes but not in spermatids. Isoform 1 is expressed in spermatids.

Its subcellular location is the endoplasmic reticulum membrane. The protein resides in the endoplasmic reticulum-Golgi intermediate compartment membrane. It localises to the golgi apparatus membrane. Its function is as follows. May play a role in male spermatogenesis. In vitro acts as inhibitor of MGAT1 activity causing cell surface proteins to carry mainly high mannose N-glycans. The function is mediated by its lumenal domain and occurs specifically in the Golgi. A catalytic glucosyltransferase activity is not detected. May be involved in regulation of Sertoli-germ cell interactions during specific stages of spermatogenesis. The chain is Alpha-1,3-mannosyl-glycoprotein 4-beta-N-acetylglucosaminyltransferase-like protein MGAT4D from Mus musculus (Mouse).